The following is a 291-amino-acid chain: Capsid protein (291 aa).

Residues 1–14 (MQSRPAQESGSASE) are compositionally biased toward polar residues. Residues 1 to 36 (MQSRPAQESGSASETPARGRPTPSDAPRDEPTNYNN) form a disordered region.

Belongs to the potexviruses coat protein family.

It is found in the virion. In terms of biological role, required for genome encapsidation. Forms ribonucleoprotein complexes along with TGB1 helicase and viral RNA. In Lily symptomless virus (LSV), this protein is Capsid protein.